Here is a 224-residue protein sequence, read N- to C-terminus: N-(5'-phosphoribosyl)anthranilate isomerase (224 aa).

Belongs to the TrpF family.

The enzyme catalyses N-(5-phospho-beta-D-ribosyl)anthranilate = 1-(2-carboxyphenylamino)-1-deoxy-D-ribulose 5-phosphate. It functions in the pathway amino-acid biosynthesis; L-tryptophan biosynthesis; L-tryptophan from chorismate: step 3/5. This is N-(5'-phosphoribosyl)anthranilate isomerase from Allorhizobium ampelinum (strain ATCC BAA-846 / DSM 112012 / S4) (Agrobacterium vitis (strain S4)).